We begin with the raw amino-acid sequence, 277 residues long: Phosphatidylserine decarboxylase proenzyme (277 aa).

Catalysis depends on charge relay system; for autoendoproteolytic cleavage activity residues D88, H144, and S242. Catalysis depends on S242, which acts as the Schiff-base intermediate with substrate; via pyruvic acid; for decarboxylase activity. S242 bears the Pyruvic acid (Ser); by autocatalysis mark.

Belongs to the phosphatidylserine decarboxylase family. PSD-B subfamily. Prokaryotic type I sub-subfamily. As to quaternary structure, heterodimer of a large membrane-associated beta subunit and a small pyruvoyl-containing alpha subunit. Requires pyruvate as cofactor. Is synthesized initially as an inactive proenzyme. Formation of the active enzyme involves a self-maturation process in which the active site pyruvoyl group is generated from an internal serine residue via an autocatalytic post-translational modification. Two non-identical subunits are generated from the proenzyme in this reaction, and the pyruvate is formed at the N-terminus of the alpha chain, which is derived from the carboxyl end of the proenzyme. The autoendoproteolytic cleavage occurs by a canonical serine protease mechanism, in which the side chain hydroxyl group of the serine supplies its oxygen atom to form the C-terminus of the beta chain, while the remainder of the serine residue undergoes an oxidative deamination to produce ammonia and the pyruvoyl prosthetic group on the alpha chain. During this reaction, the Ser that is part of the protease active site of the proenzyme becomes the pyruvoyl prosthetic group, which constitutes an essential element of the active site of the mature decarboxylase.

It is found in the cell membrane. It catalyses the reaction a 1,2-diacyl-sn-glycero-3-phospho-L-serine + H(+) = a 1,2-diacyl-sn-glycero-3-phosphoethanolamine + CO2. It functions in the pathway phospholipid metabolism; phosphatidylethanolamine biosynthesis; phosphatidylethanolamine from CDP-diacylglycerol: step 2/2. Catalyzes the formation of phosphatidylethanolamine (PtdEtn) from phosphatidylserine (PtdSer). This chain is Phosphatidylserine decarboxylase proenzyme, found in Psychrobacter arcticus (strain DSM 17307 / VKM B-2377 / 273-4).